A 118-amino-acid polypeptide reads, in one-letter code: Beta-2-microglobulin (118 aa).

The first 20 residues, 1–20 (MARVVALVLLGLLSLTGLEA), serve as a signal peptide directing secretion. An Ig-like C1-type domain is found at 22-115 (PRVPKVQVYS…LKDPLIVKWD (94 aa)). A disulfide bond links Cys45 and Cys99.

This sequence belongs to the beta-2-microglobulin family. In terms of assembly, heterodimer of an alpha chain and a beta chain. Beta-2-microglobulin is the beta-chain of major histocompatibility complex class I molecules.

It is found in the secreted. In terms of biological role, component of the class I major histocompatibility complex (MHC). Involved in the presentation of peptide antigens to the immune system. This is Beta-2-microglobulin (B2M) from Equus caballus (Horse).